The following is a 1196-amino-acid chain: Cingulin (1196 aa).

Positions 7 to 354 (MAEPRGPVDH…LVMTSGSAKG (348 aa)) are head. The ZIM signature appears at 48 to 62 (ANTYGVAVRVQGIAG). The segment at 54–67 (AVRVQGIAGQPFVV) is interaction with TJP1/ZO1. A disordered region spans residues 82-105 (IKGTNNRGPPGALSSDSELPESTY). Serine 95, serine 96, serine 98, serine 135, serine 137, serine 140, serine 155, serine 165, and serine 214 each carry phosphoserine. The segment covering 95 to 105 (SSDSELPESTY) has biased composition (polar residues). Residues 183-263 (NKFDSRQGGQ…NQGPLGGFSC (81 aa)) form a disordered region. The segment covering 218 to 231 (RLPRDTLDEREHQF) has biased composition (basic and acidic residues). Residues 245–256 (MGNSKQSSQNQG) are compositionally biased toward polar residues. Serine 274 carries the post-translational modification Phosphoserine. Residues 355–1150 (LTGQSELSQK…ARIKTLEKDS (796 aa)) are a coiled coil. Position 576 is an N6-acetyllysine (lysine 576). Over residues 884-897 (AQRQAKEWATEAEK) the composition is skewed to basic and acidic residues. Disordered stretches follow at residues 884 to 906 (AQRQ…SRLQ), 1023 to 1061 (DLKS…EERE), and 1149 to 1174 (DSWR…EEFD). Over residues 1038–1050 (SASLSQLESQNQE) the composition is skewed to low complexity. Residues 1051-1061 (LQERLQAEERE) are compositionally biased toward basic and acidic residues. The tail stretch occupies residues 1155–1196 (SRSAAESAQREGLSSDEEFDSVYDPSSIASLLTESNLQTSSC). Phosphoserine occurs at positions 1168, 1169, and 1175.

It belongs to the cingulin family. As to quaternary structure, homodimer. Interacts with TJP1/ZO1 and SPEF1.

It localises to the cell junction. It is found in the tight junction. Probably plays a role in the formation and regulation of the tight junction (TJ) paracellular permeability barrier. This chain is Cingulin, found in Canis lupus familiaris (Dog).